The chain runs to 179 residues: MHNDLKEVLLTEEDIQNICKELGAQLTKDYQGKPLVCVGILKGSAMFMSDLIKRIDTHLSIDFMDVSSYHGGTESTGEVQIIKDLGSSIENKDVLIIEDILETGTTLKSITELLQSRKVNSLEIVTLLDKPNRRKADIEAKYVGKKIPDEFVVGYGLDYRELYRNLPYIGTLKPEVYSN.

Diphosphate-binding residues include Lys42 and Gly43. Mg(2+)-binding residues include Glu98 and Asp99. The active-site Proton acceptor is Glu102. GMP-binding positions include Lys130, 151–152 (FV), and Asp158. Arg164 provides a ligand contact to diphosphate.

The protein belongs to the purine/pyrimidine phosphoribosyltransferase family. Mg(2+) serves as cofactor.

The protein localises to the cytoplasm. The catalysed reaction is IMP + diphosphate = hypoxanthine + 5-phospho-alpha-D-ribose 1-diphosphate. The enzyme catalyses GMP + diphosphate = guanine + 5-phospho-alpha-D-ribose 1-diphosphate. Its pathway is purine metabolism; IMP biosynthesis via salvage pathway; IMP from hypoxanthine: step 1/1. It participates in purine metabolism; GMP biosynthesis via salvage pathway; GMP from guanine: step 1/1. Functionally, purine salvage pathway enzyme that catalyzes the transfer of the ribosyl-5-phosphate group from 5-phospho-alpha-D-ribose 1-diphosphate (PRPP) to the N9 position of the 6-oxopurines hypoxanthine and guanine to form the corresponding ribonucleotides IMP (inosine 5'-monophosphate) and GMP (guanosine 5'-monophosphate), with the release of PPi. The chain is Hypoxanthine-guanine phosphoribosyltransferase (hpt) from Staphylococcus aureus (strain COL).